The primary structure comprises 101 residues: Urease subunit beta (101 aa).

It belongs to the urease beta subunit family. Heterotrimer of UreA (gamma), UreB (beta) and UreC (alpha) subunits. Three heterotrimers associate to form the active enzyme.

The protein resides in the cytoplasm. It catalyses the reaction urea + 2 H2O + H(+) = hydrogencarbonate + 2 NH4(+). The protein operates within nitrogen metabolism; urea degradation; CO(2) and NH(3) from urea (urease route): step 1/1. The chain is Urease subunit beta from Haemophilus influenzae (strain 86-028NP).